Here is a 587-residue protein sequence, read N- to C-terminus: Glutathione hydrolase proenzyme (587 aa).

The first 28 residues, 1-28, serve as a signal peptide directing secretion; sequence MKRTWNVCLTALLSVLLVAGSVPFHAEA. A propeptide spanning residues 29–35 is cleaved from the precursor; it reads KKPPKSY. Position 113 (arginine 113) interacts with L-glutamate. Threonine 403 functions as the Nucleophile in the catalytic mechanism. L-glutamate is bound by residues threonine 421, glutamate 423, glutamate 442, aspartate 445, 464–465, and 485–486; these read SS and GG.

This sequence belongs to the gamma-glutamyltransferase family. This enzyme consists of two polypeptide chains, which are synthesized in precursor form from a single polypeptide. Post-translationally, cleaved by autocatalysis into a large and small subunit.

It localises to the secreted. It carries out the reaction an N-terminal (5-L-glutamyl)-[peptide] + an alpha-amino acid = 5-L-glutamyl amino acid + an N-terminal L-alpha-aminoacyl-[peptide]. It catalyses the reaction glutathione + H2O = L-cysteinylglycine + L-glutamate. The catalysed reaction is an S-substituted glutathione + H2O = an S-substituted L-cysteinylglycine + L-glutamate. The protein operates within sulfur metabolism; glutathione metabolism. Its activity is regulated as follows. Inhibited by glucose. In terms of biological role, cleaves the gamma-glutamyl bond of extracellular glutathione (gamma-Glu-Cys-Gly), glutathione conjugates, and other gamma-glutamyl compounds. The metabolism of glutathione releases free glutamate and the dipeptide cysteinyl-glycine, which is hydrolyzed to cysteine and glycine by dipeptidases. Uses glutamine as a gamma-glutamyl donor and acceptor for gamma-polyglutamic acid synthesis. Dipeptides are better gamma-glutamyl acceptors than free amino acids. The polypeptide is Glutathione hydrolase proenzyme (ggt) (Bacillus subtilis subsp. natto).